A 435-amino-acid chain; its full sequence is Serine/threonine-protein kinase 40 (435 aa).

Residues 35 to 332 (FILGPRLGNS…DVLEALSAII (298 aa)) enclose the Protein kinase domain. ATP contacts are provided by residues 41–49 (LGNSPVPSI) and Lys66. Asp197 functions as the Proton acceptor in the catalytic mechanism.

Belongs to the protein kinase superfamily. CAMK Ser/Thr protein kinase family.

Its subcellular location is the nucleus. The protein localises to the cytoplasm. It carries out the reaction L-seryl-[protein] + ATP = O-phospho-L-seryl-[protein] + ADP + H(+). It catalyses the reaction L-threonyl-[protein] + ATP = O-phospho-L-threonyl-[protein] + ADP + H(+). Functionally, may be a negative regulator of NF-kappa-B and p53-mediated gene transcription. In Rattus norvegicus (Rat), this protein is Serine/threonine-protein kinase 40 (Stk40).